A 190-amino-acid polypeptide reads, in one-letter code: Dual-action ribosomal maturation protein DarP (190 aa).

The segment at 1–31 (MIHADHDDNLPDDEEGLPLPPSKSQRKRDMH) is disordered.

The protein belongs to the DarP family.

It localises to the cytoplasm. Functionally, member of a network of 50S ribosomal subunit biogenesis factors which assembles along the 30S-50S interface, preventing incorrect 23S rRNA structures from forming. Promotes peptidyl transferase center (PTC) maturation. The sequence is that of Dual-action ribosomal maturation protein DarP from Aromatoleum aromaticum (strain DSM 19018 / LMG 30748 / EbN1) (Azoarcus sp. (strain EbN1)).